The primary structure comprises 294 residues: Cytidine deaminase (294 aa).

2 CMP/dCMP-type deaminase domains span residues 48–168 (DEDA…FGPK) and 186–294 (LTGD…VLLG). Residue 89 to 91 (NME) participates in substrate binding. H102 provides a ligand contact to Zn(2+). E104 acts as the Proton donor in catalysis. C129 and C132 together coordinate Zn(2+).

It belongs to the cytidine and deoxycytidylate deaminase family. In terms of assembly, homodimer. It depends on Zn(2+) as a cofactor.

It catalyses the reaction cytidine + H2O + H(+) = uridine + NH4(+). The catalysed reaction is 2'-deoxycytidine + H2O + H(+) = 2'-deoxyuridine + NH4(+). Its function is as follows. This enzyme scavenges exogenous and endogenous cytidine and 2'-deoxycytidine for UMP synthesis. The protein is Cytidine deaminase of Salmonella paratyphi A (strain ATCC 9150 / SARB42).